Here is a 145-residue protein sequence, read N- to C-terminus: 3-dehydroquinate dehydratase (145 aa).

Residue Tyr24 is the Proton acceptor of the active site. 3 residues coordinate substrate: Asn75, His81, and Asp88. The Proton donor role is filled by His102. Substrate is bound by residues 103 to 104 (LS) and Arg113.

The protein belongs to the type-II 3-dehydroquinase family. Homododecamer.

It carries out the reaction 3-dehydroquinate = 3-dehydroshikimate + H2O. Its pathway is metabolic intermediate biosynthesis; chorismate biosynthesis; chorismate from D-erythrose 4-phosphate and phosphoenolpyruvate: step 3/7. Functionally, catalyzes a trans-dehydration via an enolate intermediate. This Chelativorans sp. (strain BNC1) protein is 3-dehydroquinate dehydratase.